The primary structure comprises 188 residues: UPF0398 protein BBR47_29830 (188 aa).

It belongs to the UPF0398 family.

This chain is UPF0398 protein BBR47_29830, found in Brevibacillus brevis (strain 47 / JCM 6285 / NBRC 100599).